A 176-amino-acid polypeptide reads, in one-letter code: Ribosome maturation factor RimP (176 aa).

It belongs to the RimP family.

Its subcellular location is the cytoplasm. Functionally, required for maturation of 30S ribosomal subunits. The polypeptide is Ribosome maturation factor RimP (Mycolicibacterium vanbaalenii (strain DSM 7251 / JCM 13017 / BCRC 16820 / KCTC 9966 / NRRL B-24157 / PYR-1) (Mycobacterium vanbaalenii)).